We begin with the raw amino-acid sequence, 86 residues long: Large ribosomal subunit protein bL31 (86 aa).

This sequence belongs to the bacterial ribosomal protein bL31 family. Type A subfamily. In terms of assembly, part of the 50S ribosomal subunit.

Binds the 23S rRNA. The sequence is that of Large ribosomal subunit protein bL31 from Parasynechococcus marenigrum (strain WH8102).